We begin with the raw amino-acid sequence, 405 residues long: Diaminohydroxyphosphoribosylamino-pyrimidine deaminase (405 aa).

The 128-residue stretch at 256-383 folds into the CMP/dCMP-type deaminase domain; sequence YNHEEYMLKA…DLLKKAGIVV (128 aa). His-305 is a binding site for Zn(2+). The Proton donor role is filled by Glu-307. Zn(2+) contacts are provided by Cys-335 and Cys-345.

It belongs to the cytidine and deoxycytidylate deaminase family. It depends on Zn(2+) as a cofactor.

It is found in the cytoplasm. The protein localises to the nucleus. The catalysed reaction is 2,5-diamino-6-hydroxy-4-(5-phosphoribosylamino)-pyrimidine + H2O + H(+) = 5-amino-6-(5-phospho-D-ribosylamino)uracil + NH4(+). It functions in the pathway cofactor biosynthesis; riboflavin biosynthesis; 5-amino-6-(D-ribitylamino)uracil from GTP: step 2/4. Its function is as follows. Involved in riboflavin biosynthesis. Converts 2,5-diamino-6-(ribosylamino)-4(3H)-pyrimidinone 5'-phosphate into 5-amino-6-(ribosylamino)-2,4(1H,3H)-pyrimidinedione 5'-phosphate. The protein is Diaminohydroxyphosphoribosylamino-pyrimidine deaminase of Schizosaccharomyces pombe (strain 972 / ATCC 24843) (Fission yeast).